The primary structure comprises 456 residues: Alcohol acyl transferase 1 allele GSc (456 aa).

Catalysis depends on proton acceptor residues His165 and Asn386.

This sequence belongs to the plant acyltransferase family. Expressed at very low levels in the skin of ripe fruit.

Its function is as follows. Involved in the biosynthesis of volatile esters which confer ripe apple fruit flavor. Alcohol acyl transferase that can use a wide range of alcohols as substrate to produce esters. The chain is Alcohol acyl transferase 1 allele GSc from Malus domestica (Apple).